The primary structure comprises 539 residues: MPTSILLIITTMIMASFCQIDITKLQHVGVLVNSPKGMKISQNFETRYLILSLIPKIEDSNSCGDQQIKQYKRLLDRLIIPLYDGLRLQKDVIVSNQESNENTDPRTKRFFGGVIGTIALGVATSAQITAAVALVEAKQARSDIEKLKEAIRDTNKAVQSVQSSIGNLIVAIKSVQDYVNKEIVPSIARLGCEAAGLQLGIALTQHYSELTNIFGDNIGSLQEKGIKLQGIASLYRTNITEIFTTSTVDKYDIYDLLFTESIKVRVIDVDLNDYSITLQVRLPLLTRLLNTQIYRVDSISYNIQNREWYIPLPSHIMTKGAFLGGADVKECIEAFSSYICPSDPGFVLNHEMESCLSGNISQCPRTVVKSDIVPRYAFVNGGVVANCITTTCTCNGIGNRINQPPDQGVKIITHKECNTIGINGMLFNTNKEGTLAFYTPNDITLNNSVALDPIDISIELNKAKSDLEESKEWIRRSNQKLDSIGNWHQSSTTIIIVLIMIIILFIINVTIIIIAVKYYRIQKRNRVDQNDKPYVLTNK.

An N-terminal signal peptide occupies residues 1–18 (MPTSILLIITTMIMASFC). Residues 19-493 (QIDITKLQHV…IGNWHQSSTT (475 aa)) are Extracellular-facing. Cysteines 63 and 192 form a disulfide. A fusion peptide region spans residues 110–134 (FFGGVIGTIALGVATSAQITAAVAL). Positions 135–163 (VEAKQARSDIEKLKEAIRDTNKAVQSVQS) form a coiled coil. Asn-238 is a glycosylation site (N-linked (GlcNAc...) asparagine; by host). Disulfide bonds link Cys-331–Cys-340, Cys-355–Cys-363, Cys-387–Cys-392, and Cys-394–Cys-417. N-linked (GlcNAc...) asparagine; by host glycosylation is present at Asn-359. Asn-446 carries N-linked (GlcNAc...) asparagine; by host glycosylation. Residues 459-484 (ELNKAKSDLEESKEWIRRSNQKLDSI) adopt a coiled-coil conformation. The helical transmembrane segment at 494–514 (IIIVLIMIIILFIINVTIIII) threads the bilayer. The Cytoplasmic segment spans residues 515–539 (AVKYYRIQKRNRVDQNDKPYVLTNK).

The protein belongs to the paramyxoviruses fusion glycoprotein family. In terms of assembly, homotrimer of disulfide-linked F1-F2. Post-translationally, the inactive precursor F0 is glycosylated and proteolytically cleaved into F1 and F2 to be functionally active. The cleavage is mediated by cellular proteases during the transport and maturation of the polypeptide.

It localises to the virion membrane. The protein localises to the host cell membrane. Class I viral fusion protein. Under the current model, the protein has at least 3 conformational states: pre-fusion native state, pre-hairpin intermediate state, and post-fusion hairpin state. During viral and plasma cell membrane fusion, the heptad repeat (HR) regions assume a trimer-of-hairpins structure, positioning the fusion peptide in close proximity to the C-terminal region of the ectodomain. The formation of this structure appears to drive apposition and subsequent fusion of viral and plasma cell membranes. Directs fusion of viral and cellular membranes leading to delivery of the nucleocapsid into the cytoplasm. This fusion is pH independent and occurs directly at the outer cell membrane. The trimer of F1-F2 (F protein) probably interacts with HN at the virion surface. Upon HN binding to its cellular receptor, the hydrophobic fusion peptide is unmasked and interacts with the cellular membrane, inducing the fusion between cell and virion membranes. Later in infection, F proteins expressed at the plasma membrane of infected cells could mediate fusion with adjacent cells to form syncytia, a cytopathic effect that could lead to tissue necrosis. The polypeptide is Fusion glycoprotein F0 (F) (Homo sapiens (Human)).